A 375-amino-acid chain; its full sequence is Chaperone protein DnaJ (375 aa).

A J domain is found at 6 to 71; that stretch reads DYYEVLGVPK…EKRRQYDQFG (66 aa). A CR-type zinc finger spans residues 138-220; it reads GTTKKIDVTL…CYGTGYISSK (83 aa). Zn(2+)-binding residues include Cys151, Cys154, Cys168, Cys171, Cys194, Cys197, Cys208, and Cys211. CXXCXGXG motif repeat units follow at residues 151-158, 168-175, 194-201, and 208-215; these read CSSCHGTG, CSKCGGRG, CPDCHGTG, and CPDCYGTG.

The protein belongs to the DnaJ family. As to quaternary structure, homodimer. Zn(2+) is required as a cofactor.

Its subcellular location is the cytoplasm. Participates actively in the response to hyperosmotic and heat shock by preventing the aggregation of stress-denatured proteins and by disaggregating proteins, also in an autonomous, DnaK-independent fashion. Unfolded proteins bind initially to DnaJ; upon interaction with the DnaJ-bound protein, DnaK hydrolyzes its bound ATP, resulting in the formation of a stable complex. GrpE releases ADP from DnaK; ATP binding to DnaK triggers the release of the substrate protein, thus completing the reaction cycle. Several rounds of ATP-dependent interactions between DnaJ, DnaK and GrpE are required for fully efficient folding. Also involved, together with DnaK and GrpE, in the DNA replication of plasmids through activation of initiation proteins. The chain is Chaperone protein DnaJ from Lachnospira eligens (strain ATCC 27750 / DSM 3376 / VPI C15-48 / C15-B4) (Eubacterium eligens).